A 486-amino-acid chain; its full sequence is 2-hydroxymuconic semialdehyde dehydrogenase (486 aa).

Active-site residues include Glu-254 and Cys-288.

This sequence belongs to the aldehyde dehydrogenase family. As to quaternary structure, homodimer.

It carries out the reaction (2Z,4E)-2-hydroxy-6-oxohexa-2,4-dienoate + NAD(+) + H2O = (2Z,4E)-2-hydroxyhexa-2,4-dienedioate + NADH + 2 H(+). Its pathway is aromatic compound metabolism; benzoate degradation via hydroxylation. Functionally, 2-hydroxymuconic acid semialdehyde can be converted to 2-hydroxypent-2,4-dienoate either directly by the action of 2-hydroxymuconic semialdehyde hydrolase (HMSH) or by the action of three sequential enzymes, the first of which is HMSD. Can oxidize not only 2-hydroxymuconic semialdehyde and its analogs but also benzaldehyde and its analogs. The sequence is that of 2-hydroxymuconic semialdehyde dehydrogenase (xylG) from Pseudomonas putida (Arthrobacter siderocapsulatus).